A 39-amino-acid polypeptide reads, in one-letter code: Photosystem I reaction center subunit IX (39 aa).

A helical membrane pass occupies residues 7–27; it reads FLTTAPVAFILFSSFVFALFI.

This sequence belongs to the PsaJ family.

The protein localises to the cellular thylakoid membrane. Functionally, may help in the organization of the PsaE and PsaF subunits. The sequence is that of Photosystem I reaction center subunit IX from Synechococcus sp. (strain JA-2-3B'a(2-13)) (Cyanobacteria bacterium Yellowstone B-Prime).